A 118-amino-acid chain; its full sequence is MYVEVLKSKIHRVTITEANLNYVGSITIDEDLMDAANIIAGEKVQIVDNNNGARLETYTIPGKRGSGVICLNGAAARIVHPGDIIIIMAYAWMPMEEAKVFKPAVVFPDTATNKIILK.

Ser25 (schiff-base intermediate with substrate; via pyruvic acid) is an active-site residue. Ser25 is modified (pyruvic acid (Ser)). Thr57 provides a ligand contact to substrate. Tyr58 serves as the catalytic Proton donor. Residue 73 to 75 coordinates substrate; it reads GAA.

Belongs to the PanD family. In terms of assembly, heterooctamer of four alpha and four beta subunits. Requires pyruvate as cofactor. Post-translationally, is synthesized initially as an inactive proenzyme, which is activated by self-cleavage at a specific serine bond to produce a beta-subunit with a hydroxyl group at its C-terminus and an alpha-subunit with a pyruvoyl group at its N-terminus.

The protein resides in the cytoplasm. The catalysed reaction is L-aspartate + H(+) = beta-alanine + CO2. The protein operates within cofactor biosynthesis; (R)-pantothenate biosynthesis; beta-alanine from L-aspartate: step 1/1. Its function is as follows. Catalyzes the pyruvoyl-dependent decarboxylation of aspartate to produce beta-alanine. The polypeptide is Aspartate 1-decarboxylase (Porphyromonas gingivalis (strain ATCC 33277 / DSM 20709 / CIP 103683 / JCM 12257 / NCTC 11834 / 2561)).